The chain runs to 66 residues: Large ribosomal subunit protein uL29 (66 aa).

This sequence belongs to the universal ribosomal protein uL29 family.

This chain is Large ribosomal subunit protein uL29, found in Methylibium petroleiphilum (strain ATCC BAA-1232 / LMG 22953 / PM1).